The chain runs to 62 residues: MARCRRHSRSRSRSRNQCQRRRRRHYNRRRTYRRSRRHSRRRRVRRRGCSCRRCSRRRRRRC.

Positions 1-46 are disordered; the sequence is MARCRRHSRSRSRSRNQCQRRRRRHYNRRRTYRRSRRHSRRRRVRR.

It belongs to the protamine P1 family. As to expression, testis.

It localises to the nucleus. The protein localises to the chromosome. Functionally, protamines substitute for histones in the chromatin of sperm during the haploid phase of spermatogenesis. They compact sperm DNA into a highly condensed, stable and inactive complex. This Planigale gilesi (Flat-skulled marsupial mouse) protein is Sperm protamine P1 (PRM1).